Here is a 462-residue protein sequence, read N- to C-terminus: MILVSLLPLLFMTGIASESTISSGLASLKAKIDIKKPTGKQLFDKVKSMEQALENKFSDDDERAKVMGAIGSLGTAIGKFQSGDPASIASGCLDILVGISSVLKDFAKFSPVFSILSLVVGLFSGTKAEESVSSVVTKAIQEQSDQELQEALYGVKREFAVSKAFLDGVRNEESDLRPTEVSALAANIPVYQGVRFIAMVVQRIKYIKPKTESEIKRMLTMLELFTDLCSIRDLILLDLHQLIATPGHSPNIASGIKEVTSLGREEYQRVFEDLLKTDDEETFLFLSYLYPKEKNEQSRKIFKFFDLIEVKYDDRFKLDLSGGQALSTLQWPNYYLCPHNDYLANNCHDLRVGLKLEKLSDGFYTIKTYGRDPRTCYWTDDYVKISSTSNGELEKFSFVPVQVKGQKAYLLSTKKWPHNFAYSQKTANGLLSILKDVPSKLGYGNQGFFTISTYSNPKNRHA.

The signal sequence occupies residues 1–17 (MILVSLLPLLFMTGIAS).

This sequence belongs to the jellyfish toxin family. Type I subfamily. In terms of assembly, oligomer. Contains disulfide bonds. Nematocytes.

The protein resides in the secreted. The protein localises to the nematocyst. It localises to the target cell membrane. Its function is as follows. May cause profound effects on the cardiovascular system of anesthetized rats (at 25 ug/kg), since the fraction containing this toxin and CfTX-1 produces an initial increase in mean arterial pressure, followed by cardiovascular collapse in all animals within 1 minute of injection. To note, the same fraction does not induce significant change in heart rate. Has weak hemolytic activity. Is lethal to crayfish. Causes cutaneous inflammation in humans. May act as a pore-forming toxin, disrupting normal transmembrane ion concentration gradients in susceptible cells. This chain is Toxin CfTX-2, found in Chironex fleckeri (Australian box jellyfish).